Consider the following 321-residue polypeptide: D-alanine--D-alanine ligase (321 aa).

The ATP-grasp domain occupies 121–315 (RIWFLTNNIN…FTNLIEEIIK (195 aa)). 147 to 199 (PMKRPYVIKPLTQGSSIGVEVIFAEDDFNFADYDFPYGDQVIIEQYIKGRELQ) is an ATP binding site. Mg(2+)-binding residues include Glu-268, Glu-282, and Asn-284.

The protein belongs to the D-alanine--D-alanine ligase family. Mg(2+) serves as cofactor. Mn(2+) is required as a cofactor.

It is found in the cytoplasm. It catalyses the reaction 2 D-alanine + ATP = D-alanyl-D-alanine + ADP + phosphate + H(+). Its pathway is cell wall biogenesis; peptidoglycan biosynthesis. In terms of biological role, cell wall formation. In Rickettsia africae (strain ESF-5), this protein is D-alanine--D-alanine ligase.